Here is a 349-residue protein sequence, read N- to C-terminus: N-formyl peptide receptor 3 (349 aa).

Residues 1–27 (METNFSIPLNETEEVLPEPAGHTVLWI) lie on the Extracellular side of the membrane. N-linked (GlcNAc...) asparagine glycosylation is found at Asn-4 and Asn-10. The chain crosses the membrane as a helical span at residues 28-50 (FSLLVHGVTFVFGVLGNGLVIWV). At 51 to 61 (AGFRMTRTVNT) the chain is on the cytoplasmic side. A helical transmembrane segment spans residues 62–83 (ICYLNLALADFSFSAILPFRMV). At 84–100 (SVAMREKWPFGSFLCKL) the chain is on the extracellular side. Residues Cys-98 and Cys-176 are joined by a disulfide bond. A helical transmembrane segment spans residues 101–121 (VHVMIDINLFVSVYLITIIAL). Topologically, residues 122–140 (DRCICVLHPAWAQNHRTMS) are cytoplasmic. The helical transmembrane segment at 141–162 (LAKRVMTGLWILTIVLTLPNFI) threads the bilayer. Over 163 to 205 (FWTTIRTTNGDTYCIFNFAFWGDTAVERLNVFITMAKVFLILH) the chain is Extracellular. The helical transmembrane segment at 206–226 (FIIGFSMPMSIITVCYGIIAA) threads the bilayer. Residues 227–242 (KIHRNHMIKSSRPLRV) are Cytoplasmic-facing. The helical transmembrane segment at 243–266 (FAAVVASFFICWFPYELIGILMAV) threads the bilayer. Residues 267–286 (WLKEMLLNGKYKIILVLINP) lie on the Extracellular side of the membrane. A helical transmembrane segment spans residues 287–306 (TSSLAFFNSCLNPILYVFMG). The Cytoplasmic segment spans residues 307 to 349 (RNFQERLIRSLPTSLERALTEVPDSAQTSNTHTTSASPPEETE). Residues 327–349 (EVPDSAQTSNTHTTSASPPEETE) are disordered. Residues 331–343 (SAQTSNTHTTSAS) are compositionally biased toward polar residues.

This sequence belongs to the G-protein coupled receptor 1 family.

The protein resides in the cell membrane. In terms of biological role, low affinity receptor for N-formyl-methionyl peptides, which are powerful neutrophils chemotactic factors. Binding of FMLP to the receptor causes activation of neutrophils. This response is mediated via a G-protein that activates a phosphatidylinositol-calcium second messenger system. The chain is N-formyl peptide receptor 3 (FPR3) from Pan troglodytes (Chimpanzee).